A 95-amino-acid chain; its full sequence is uncharacterized protein (95 aa).

The signal sequence occupies residues Met1–Cys17.

This is an uncharacterized protein from Saccharomyces cerevisiae (strain ATCC 204508 / S288c) (Baker's yeast).